Consider the following 595-residue polypeptide: UvrABC system protein C (595 aa).

The GIY-YIG domain occupies 17 to 94; it reads IEPGCYLMKD…IKQYQPRYNI (78 aa). The region spanning 199-234 is the UVR domain; sequence KTILHNLEQKMQESSESLDFERAKEYRDLIQHIHNL.

This sequence belongs to the UvrC family. Interacts with UvrB in an incision complex.

It localises to the cytoplasm. Its function is as follows. The UvrABC repair system catalyzes the recognition and processing of DNA lesions. UvrC both incises the 5' and 3' sides of the lesion. The N-terminal half is responsible for the 3' incision and the C-terminal half is responsible for the 5' incision. This Staphylococcus saprophyticus subsp. saprophyticus (strain ATCC 15305 / DSM 20229 / NCIMB 8711 / NCTC 7292 / S-41) protein is UvrABC system protein C.